Reading from the N-terminus, the 83-residue chain is Kunitz-type serine protease inhibitor scutellin-3 (83 aa).

The first 24 residues, M1–S24, serve as a signal peptide directing secretion. A BPTI/Kunitz inhibitor domain is found at C31–C81. Intrachain disulfides connect C31-C81, C40-C64, and C56-C77.

Belongs to the venom Kunitz-type family. Expressed by the venom gland.

It is found in the secreted. Its function is as follows. Serine protease inhibitor. The sequence is that of Kunitz-type serine protease inhibitor scutellin-3 from Oxyuranus scutellatus scutellatus (Australian taipan).